The chain runs to 246 residues: 4-hydroxy-tetrahydrodipicolinate reductase (246 aa).

7–12 serves as a coordination point for NAD(+); the sequence is GCSGRM. Arginine 34 lines the NADP(+) pocket. NAD(+) is bound by residues 76–78 and 102–105; these read ATT and CPNT. Histidine 135 functions as the Proton donor/acceptor in the catalytic mechanism. Histidine 136 is a binding site for (S)-2,3,4,5-tetrahydrodipicolinate. Lysine 139 functions as the Proton donor in the catalytic mechanism. 145-146 contributes to the (S)-2,3,4,5-tetrahydrodipicolinate binding site; the sequence is GT.

The protein belongs to the DapB family.

It localises to the cytoplasm. It carries out the reaction (S)-2,3,4,5-tetrahydrodipicolinate + NAD(+) + H2O = (2S,4S)-4-hydroxy-2,3,4,5-tetrahydrodipicolinate + NADH + H(+). It catalyses the reaction (S)-2,3,4,5-tetrahydrodipicolinate + NADP(+) + H2O = (2S,4S)-4-hydroxy-2,3,4,5-tetrahydrodipicolinate + NADPH + H(+). It participates in amino-acid biosynthesis; L-lysine biosynthesis via DAP pathway; (S)-tetrahydrodipicolinate from L-aspartate: step 4/4. Functionally, catalyzes the conversion of 4-hydroxy-tetrahydrodipicolinate (HTPA) to tetrahydrodipicolinate. This Chlamydia felis (strain Fe/C-56) (Chlamydophila felis) protein is 4-hydroxy-tetrahydrodipicolinate reductase.